A 297-amino-acid chain; its full sequence is uncharacterized protein (297 aa).

Polar residues predominate over residues 1–12; the sequence is MASYSFQFSTDA. The segment at 1–21 is disordered; it reads MASYSFQFSTDATGKPGAAKP.

This sequence to B.subtilis XkdY/XepA.

This is an uncharacterized protein from Bacillus subtilis (strain 168).